The sequence spans 279 residues: 4-hydroxy-3-methylbut-2-enyl diphosphate reductase (279 aa).

Residue Cys12 participates in [4Fe-4S] cluster binding. (2E)-4-hydroxy-3-methylbut-2-enyl diphosphate contacts are provided by His36 and His70. Positions 36 and 70 each coordinate dimethylallyl diphosphate. The isopentenyl diphosphate site is built by His36 and His70. Cys92 provides a ligand contact to [4Fe-4S] cluster. His120 lines the (2E)-4-hydroxy-3-methylbut-2-enyl diphosphate pocket. A dimethylallyl diphosphate-binding site is contributed by His120. His120 contacts isopentenyl diphosphate. Glu122 (proton donor) is an active-site residue. A (2E)-4-hydroxy-3-methylbut-2-enyl diphosphate-binding site is contributed by Thr158. Cys186 serves as a coordination point for [4Fe-4S] cluster. (2E)-4-hydroxy-3-methylbut-2-enyl diphosphate contacts are provided by Ser214, Ser215, Asn216, and Ser258. Residues Ser214, Ser215, Asn216, and Ser258 each coordinate dimethylallyl diphosphate. Isopentenyl diphosphate-binding residues include Ser214, Ser215, Asn216, and Ser258.

The protein belongs to the IspH family. [4Fe-4S] cluster is required as a cofactor.

It catalyses the reaction isopentenyl diphosphate + 2 oxidized [2Fe-2S]-[ferredoxin] + H2O = (2E)-4-hydroxy-3-methylbut-2-enyl diphosphate + 2 reduced [2Fe-2S]-[ferredoxin] + 2 H(+). It carries out the reaction dimethylallyl diphosphate + 2 oxidized [2Fe-2S]-[ferredoxin] + H2O = (2E)-4-hydroxy-3-methylbut-2-enyl diphosphate + 2 reduced [2Fe-2S]-[ferredoxin] + 2 H(+). The protein operates within isoprenoid biosynthesis; dimethylallyl diphosphate biosynthesis; dimethylallyl diphosphate from (2E)-4-hydroxy-3-methylbutenyl diphosphate: step 1/1. Its pathway is isoprenoid biosynthesis; isopentenyl diphosphate biosynthesis via DXP pathway; isopentenyl diphosphate from 1-deoxy-D-xylulose 5-phosphate: step 6/6. Catalyzes the conversion of 1-hydroxy-2-methyl-2-(E)-butenyl 4-diphosphate (HMBPP) into a mixture of isopentenyl diphosphate (IPP) and dimethylallyl diphosphate (DMAPP). Acts in the terminal step of the DOXP/MEP pathway for isoprenoid precursor biosynthesis. In Campylobacter fetus subsp. fetus (strain 82-40), this protein is 4-hydroxy-3-methylbut-2-enyl diphosphate reductase.